The following is a 236-amino-acid chain: Phosphoribosylaminoimidazole-succinocarboxamide synthase (236 aa).

Belongs to the SAICAR synthetase family.

It carries out the reaction 5-amino-1-(5-phospho-D-ribosyl)imidazole-4-carboxylate + L-aspartate + ATP = (2S)-2-[5-amino-1-(5-phospho-beta-D-ribosyl)imidazole-4-carboxamido]succinate + ADP + phosphate + 2 H(+). It functions in the pathway purine metabolism; IMP biosynthesis via de novo pathway; 5-amino-1-(5-phospho-D-ribosyl)imidazole-4-carboxamide from 5-amino-1-(5-phospho-D-ribosyl)imidazole-4-carboxylate: step 1/2. This is Phosphoribosylaminoimidazole-succinocarboxamide synthase from Akkermansia muciniphila (strain ATCC BAA-835 / DSM 22959 / JCM 33894 / BCRC 81048 / CCUG 64013 / CIP 107961 / Muc).